Reading from the N-terminus, the 257-residue chain is MGRVIRGQRKGAGSVFKAHVKHRKGAAKLRAIDFAERNGYIKGIVKDIIHDPGRGAPLAKVAFRDPYRFKKRTELFVAAEGIHTGQFVYCGKKAQLNIGNVLPVGTMPEGTIVCCVEEKPGDRGKLARASGNYATVISHNPETKKTRVKLPSGSKKVISSANRAIVGVVAGGGRIDKPILKAGRAYHKYKAKRNCWPRVRGVAMNPVEHPFGGGNHQHIGKPSTIRRDAPAGRKVGLIAARRTGRLRGTKTVQEKEN.

The tract at residues 207–231 is disordered; the sequence is VEHPFGGGNHQHIGKPSTIRRDAPA.

Belongs to the universal ribosomal protein uL2 family. As to quaternary structure, component of the large ribosomal subunit.

It localises to the cytoplasm. Functionally, component of the large ribosomal subunit. The ribosome is a large ribonucleoprotein complex responsible for the synthesis of proteins in the cell. This is Large ribosomal subunit protein uL2 (rpl8) from Xenopus laevis (African clawed frog).